A 92-amino-acid polypeptide reads, in one-letter code: MEERQITIVDEKGNEHLCEIIFTFDADKFGKKSYVIFSPIGEVDEDGDPIYDAMAYEQNEEEGGVLLPIESEEEWEMVQETFNTIADEQEAE.

It belongs to the UPF0473 family.

The sequence is that of UPF0473 protein BC_4380 from Bacillus cereus (strain ATCC 14579 / DSM 31 / CCUG 7414 / JCM 2152 / NBRC 15305 / NCIMB 9373 / NCTC 2599 / NRRL B-3711).